The chain runs to 210 residues: Shikimate kinase (210 aa).

Position 34–39 (34–39 (GVGKSV)) interacts with ATP. Position 38 (S38) interacts with Mg(2+). Substrate-binding residues include D56, R80, and G102. R140 is a binding site for ATP. Residue R159 coordinates substrate.

It belongs to the shikimate kinase family. As to quaternary structure, monomer. Requires Mg(2+) as cofactor.

The protein resides in the cytoplasm. It catalyses the reaction shikimate + ATP = 3-phosphoshikimate + ADP + H(+). It functions in the pathway metabolic intermediate biosynthesis; chorismate biosynthesis; chorismate from D-erythrose 4-phosphate and phosphoenolpyruvate: step 5/7. Functionally, catalyzes the specific phosphorylation of the 3-hydroxyl group of shikimic acid using ATP as a cosubstrate. The polypeptide is Shikimate kinase (Bartonella henselae (strain ATCC 49882 / DSM 28221 / CCUG 30454 / Houston 1) (Rochalimaea henselae)).